A 445-amino-acid chain; its full sequence is Histidinol dehydrogenase (445 aa).

Tyr138, Gln199, and Asn222 together coordinate NAD(+). Substrate is bound by residues Ser245, Gln267, and His270. Zn(2+) contacts are provided by Gln267 and His270. Active-site proton acceptor residues include Glu335 and His336. 4 residues coordinate substrate: His336, Asp369, Glu423, and His428. Asp369 contacts Zn(2+). His428 is a binding site for Zn(2+).

The protein belongs to the histidinol dehydrogenase family. The cofactor is Zn(2+).

The catalysed reaction is L-histidinol + 2 NAD(+) + H2O = L-histidine + 2 NADH + 3 H(+). The protein operates within amino-acid biosynthesis; L-histidine biosynthesis; L-histidine from 5-phospho-alpha-D-ribose 1-diphosphate: step 9/9. Its function is as follows. Catalyzes the sequential NAD-dependent oxidations of L-histidinol to L-histidinaldehyde and then to L-histidine. The polypeptide is Histidinol dehydrogenase (Burkholderia mallei (strain ATCC 23344)).